We begin with the raw amino-acid sequence, 681 residues long: PWWP domain-containing DNA repair factor 3B (681 aa).

Polar residues predominate over residues Asn102–Val121. 3 disordered regions span residues Asn102–Asp144, His166–Lys200, and Gln285–Ser304. Residue Ser128 is modified to Phosphoserine. Polar residues predominate over residues Gln285–Gly302. A PWWP domain is found at Thr377 to Ala438.

This sequence belongs to the PWWP3A family.

In Mus musculus (Mouse), this protein is PWWP domain-containing DNA repair factor 3B (Pwwp3b).